We begin with the raw amino-acid sequence, 113 residues long: Ig kappa chain V-II region 17S29.1 (113 aa).

Positions 1 to 23 (DIVMTQAVFSNPVTLGTSASISC) are framework-1. The cysteines at positions 23 and 93 are disulfide-linked. A complementarity-determining-1 region spans residues 24–39 (RSSKSLLHSNGITYLY). A framework-2 region spans residues 40-54 (WYLQKPGQSPQLLLY). Positions 55-61 (QMSNLAS) are complementarity-determining-2. The interval 62-93 (GVPDRFSSSGSGTDFTLRISRVEAEDVGVYYC) is framework-3. The segment at 94–102 (AHNLELPYT) is complementarity-determining-3. Residues 103–112 (FGGGTKLEIK) form a framework-4 region.

Anti-streptococcal group A carbohydrate antibody. The sequence is that of Ig kappa chain V-II region 17S29.1 from Mus musculus (Mouse).